The sequence spans 160 residues: Cytochrome b6-f complex subunit 4 (160 aa).

3 consecutive transmembrane segments (helical) span residues 36–56, 95–115, and 131–151; these read LLYI…GLAV, LLGV…PFLE, and TVFL…TLPI.

This sequence belongs to the cytochrome b family. PetD subfamily. As to quaternary structure, the 4 large subunits of the cytochrome b6-f complex are cytochrome b6, subunit IV (17 kDa polypeptide, petD), cytochrome f and the Rieske protein, while the 4 small subunits are petG, petL, petM and petN. The complex functions as a dimer.

It is found in the plastid. Its subcellular location is the chloroplast thylakoid membrane. Its function is as follows. Component of the cytochrome b6-f complex, which mediates electron transfer between photosystem II (PSII) and photosystem I (PSI), cyclic electron flow around PSI, and state transitions. This Gossypium barbadense (Sea Island cotton) protein is Cytochrome b6-f complex subunit 4.